The chain runs to 157 residues: Small ribosomal subunit protein uS7 (157 aa).

The protein belongs to the universal ribosomal protein uS7 family. Part of the 30S ribosomal subunit. Contacts proteins S9 and S11.

One of the primary rRNA binding proteins, it binds directly to 16S rRNA where it nucleates assembly of the head domain of the 30S subunit. Is located at the subunit interface close to the decoding center, probably blocks exit of the E-site tRNA. This is Small ribosomal subunit protein uS7 from Polaromonas naphthalenivorans (strain CJ2).